Consider the following 398-residue polypeptide: Ubiquitin-like modifier-activating enzyme 5 (398 aa).

ATP is bound by residues Gly79, Asp100, Lys123, Asn146, and Asn180. Positions 222 and 225 each coordinate Zn(2+). The Glycyl thioester intermediate role is filled by Cys246. Residues Cys299 and Cys304 each contribute to the Zn(2+) site. The short motif at 330-342 is the UFM1-interacting sequence (UIS) element; it reads VVHEDNEWGIELV. The tract at residues 343-373 is linker; the sequence is SEVTEAELQDASGPIPDLPEGITVAYTIPEK. The short motif at 383-398 is the UFC1-binding sequence (UFC) element; sequence ETEQSLEELMAQMKKI.

It belongs to the ubiquitin-activating E1 family. UBA5 subfamily. Homodimer; homodimerization is required for ufm1 activation. Interacts (via UIS motif) with ufm1; binds ufm1 via a trans-binding mechanism in which ufm1 interacts with distinct sites in both subunits of the uba5 homodimer. Interacts (via C-terminus) with ufc1.

It is found in the cytoplasm. The protein resides in the nucleus. Its subcellular location is the endoplasmic reticulum membrane. The protein localises to the golgi apparatus. In terms of biological role, E1-like enzyme which specifically catalyzes the first step in ufmylation. Activates ufm1 by first adenylating its C-terminal glycine residue with ATP, and thereafter linking this residue to the side chain of a cysteine residue in E1, yielding a ufm1-E1 thioester and free AMP. Activates ufm1 via a trans-binding mechanism, in which ufm1 interacts with distinct sites in both subunits of the uba5 homodimer. Trans-binding also promotes stabilization of the uba5 homodimer, and enhances ATP-binding. Transfer of ufm1 from uba5 to the E2-like enzyme UFC1 also takes place using a trans mechanism. Ufmylation plays a key role in various processes, such as ribosome recycling, response to DNA damage, interferon response or reticulophagy (also called ER-phagy). The sequence is that of Ubiquitin-like modifier-activating enzyme 5 from Danio rerio (Zebrafish).